A 460-amino-acid chain; its full sequence is MSNNNFKDDFEKNRQSINPDEHQTELKEDDKTNENKKEADSQNSLSNNSNQQFPPRNAQRRKRRRETATNQSKQQDDKHQKNSDAKTTEGSLDDRYDEAQLQQQHDKSQQQNKTEKQSQDNRMKDGKDAAIVNGTSESPEHKSKSTQNRPGPKAQQQKRKSESTQSKPSTNKDKKAATGAGIAGAAGVAGAAETSKRHHNKKDKQDSKHSNHENDEKSVKNDDQKQSKKGKKAAVGAGAAAGVGAAGVAHHNNQNKHHNEEKNSNQNNQYNDQSEGKKKGGFMKILLPLIAAILILGAIAIFGGMALNNHNDSKSDDQKIANQSKKDSDKKDGAQSEDNKDKKSDSNKDKKSDSDKNADDDSDNSSSNPNATSTNNNDNVANNNSNYTNQNQQDNANQNSNNQQATQGQQSHTVYGQENLYRIAIQYYGEGTQANVDKIKRANGLSSNNIHNGQTLVIPQ.

The segment covering 1–40 (MSNNNFKDDFEKNRQSINPDEHQTELKEDDKTNENKKEAD) has biased composition (basic and acidic residues). The segment at 1–277 (MSNNNFKDDF…NQYNDQSEGK (277 aa)) is disordered. Residues 41-57 (SQNSLSNNSNQQFPPRN) show a composition bias toward low complexity. Over residues 74 to 128 (QQDDKHQKNSDAKTTEGSLDDRYDEAQLQQQHDKSQQQNKTEKQSQDNRMKDGKD) the composition is skewed to basic and acidic residues. Residues 177-192 (ATGAGIAGAAGVAGAA) show a composition bias toward low complexity. Over residues 203-226 (DKQDSKHSNHENDEKSVKNDDQKQ) the composition is skewed to basic and acidic residues. Residues 264-273 (SNQNNQYNDQ) show a composition bias toward low complexity. The chain crosses the membrane as a helical span at residues 285–305 (ILLPLIAAILILGAIAIFGGM). The span at 313–359 (SKSDDQKIANQSKKDSDKKDGAQSEDNKDKKSDSNKDKKSDSDKNAD) shows a compositional bias: basic and acidic residues. The segment at 313–411 (SKSDDQKIAN…NQQATQGQQS (99 aa)) is disordered. Residues 364 to 411 (NSSSNPNATSTNNNDNVANNNSNYTNQNQQDNANQNSNNQQATQGQQS) show a composition bias toward low complexity. The 49-residue stretch at 410-458 (QSHTVYGQENLYRIAIQYYGEGTQANVDKIKRANGLSSNNIHNGQTLVI) folds into the LysM domain.

Its subcellular location is the cell membrane. This Staphylococcus epidermidis (strain ATCC 35984 / DSM 28319 / BCRC 17069 / CCUG 31568 / BM 3577 / RP62A) protein is Probable elastin-binding protein EbpS (ebpS).